The sequence spans 348 residues: Phosphoribosylformylglycinamidine cyclo-ligase (348 aa).

It belongs to the AIR synthase family.

The protein resides in the cytoplasm. The enzyme catalyses 2-formamido-N(1)-(5-O-phospho-beta-D-ribosyl)acetamidine + ATP = 5-amino-1-(5-phospho-beta-D-ribosyl)imidazole + ADP + phosphate + H(+). The protein operates within purine metabolism; IMP biosynthesis via de novo pathway; 5-amino-1-(5-phospho-D-ribosyl)imidazole from N(2)-formyl-N(1)-(5-phospho-D-ribosyl)glycinamide: step 2/2. The protein is Phosphoribosylformylglycinamidine cyclo-ligase of Citrifermentans bemidjiense (strain ATCC BAA-1014 / DSM 16622 / JCM 12645 / Bem) (Geobacter bemidjiensis).